Consider the following 244-residue polypeptide: Orotidine 5'-phosphate decarboxylase (244 aa).

Substrate is bound by residues Asp-10, Lys-32, 59-68 (DLKLHDIPNT), Thr-122, Arg-184, Gln-193, Gly-213, and Arg-214. Lys-61 functions as the Proton donor in the catalytic mechanism.

It belongs to the OMP decarboxylase family. Type 1 subfamily. As to quaternary structure, homodimer.

The enzyme catalyses orotidine 5'-phosphate + H(+) = UMP + CO2. The protein operates within pyrimidine metabolism; UMP biosynthesis via de novo pathway; UMP from orotate: step 2/2. In terms of biological role, catalyzes the decarboxylation of orotidine 5'-monophosphate (OMP) to uridine 5'-monophosphate (UMP). In Bacillus caldolyticus, this protein is Orotidine 5'-phosphate decarboxylase.